The following is a 364-amino-acid chain: DNA replication and repair protein RecF (364 aa).

Position 30–37 (30–37 (GDNGAGKT)) interacts with ATP.

The protein belongs to the RecF family.

The protein localises to the cytoplasm. Its function is as follows. The RecF protein is involved in DNA metabolism; it is required for DNA replication and normal SOS inducibility. RecF binds preferentially to single-stranded, linear DNA. It also seems to bind ATP. The sequence is that of DNA replication and repair protein RecF from Stenotrophomonas maltophilia (strain R551-3).